The following is a 343-amino-acid chain: 4-hydroxy-3-methylbut-2-enyl diphosphate reductase (343 aa).

Residue Cys18 coordinates [4Fe-4S] cluster. (2E)-4-hydroxy-3-methylbut-2-enyl diphosphate is bound by residues His47 and His83. His47 and His83 together coordinate dimethylallyl diphosphate. Isopentenyl diphosphate-binding residues include His47 and His83. Cys105 provides a ligand contact to [4Fe-4S] cluster. (2E)-4-hydroxy-3-methylbut-2-enyl diphosphate is bound at residue His133. Residue His133 coordinates dimethylallyl diphosphate. His133 serves as a coordination point for isopentenyl diphosphate. Glu135 serves as the catalytic Proton donor. Residue Thr174 participates in (2E)-4-hydroxy-3-methylbut-2-enyl diphosphate binding. Cys204 lines the [4Fe-4S] cluster pocket. (2E)-4-hydroxy-3-methylbut-2-enyl diphosphate-binding residues include Ser232, Ser233, Asn234, and Ser277. Ser232, Ser233, Asn234, and Ser277 together coordinate dimethylallyl diphosphate. Residues Ser232, Ser233, Asn234, and Ser277 each contribute to the isopentenyl diphosphate site.

It belongs to the IspH family. It depends on [4Fe-4S] cluster as a cofactor.

It carries out the reaction isopentenyl diphosphate + 2 oxidized [2Fe-2S]-[ferredoxin] + H2O = (2E)-4-hydroxy-3-methylbut-2-enyl diphosphate + 2 reduced [2Fe-2S]-[ferredoxin] + 2 H(+). The enzyme catalyses dimethylallyl diphosphate + 2 oxidized [2Fe-2S]-[ferredoxin] + H2O = (2E)-4-hydroxy-3-methylbut-2-enyl diphosphate + 2 reduced [2Fe-2S]-[ferredoxin] + 2 H(+). Its pathway is isoprenoid biosynthesis; dimethylallyl diphosphate biosynthesis; dimethylallyl diphosphate from (2E)-4-hydroxy-3-methylbutenyl diphosphate: step 1/1. It participates in isoprenoid biosynthesis; isopentenyl diphosphate biosynthesis via DXP pathway; isopentenyl diphosphate from 1-deoxy-D-xylulose 5-phosphate: step 6/6. Its function is as follows. Catalyzes the conversion of 1-hydroxy-2-methyl-2-(E)-butenyl 4-diphosphate (HMBPP) into a mixture of isopentenyl diphosphate (IPP) and dimethylallyl diphosphate (DMAPP). Acts in the terminal step of the DOXP/MEP pathway for isoprenoid precursor biosynthesis. This chain is 4-hydroxy-3-methylbut-2-enyl diphosphate reductase, found in Bartonella henselae (strain ATCC 49882 / DSM 28221 / CCUG 30454 / Houston 1) (Rochalimaea henselae).